Consider the following 154-residue polypeptide: Large ribosomal subunit protein uL13 (154 aa).

It belongs to the universal ribosomal protein uL13 family. Part of the 50S ribosomal subunit.

Functionally, this protein is one of the early assembly proteins of the 50S ribosomal subunit, although it is not seen to bind rRNA by itself. It is important during the early stages of 50S assembly. In Rhizobium johnstonii (strain DSM 114642 / LMG 32736 / 3841) (Rhizobium leguminosarum bv. viciae), this protein is Large ribosomal subunit protein uL13.